Here is a 230-residue protein sequence, read N- to C-terminus: MNYEGKTKIVKVTDDYALLEFKDDITAGDGLKHDVLTGKGSICAETTAILMKYLSEKGIKTHLVEYIPPRTLKVIPLKMFPLEVVVRLKKAGSFVRRYGGVEGEDLPVPLVEFFIKDDERHDPMVCVDHLEILGIATREQAEKMKEAAVKATLALKEFFERANFELWDIKYEFGLDKDGNVVLGDEISPDTFRLRKKGEIFDKDVYRRDLGDPLKKYREVLELCRSLNSQ.

The protein belongs to the SAICAR synthetase family.

It catalyses the reaction 5-amino-1-(5-phospho-D-ribosyl)imidazole-4-carboxylate + L-aspartate + ATP = (2S)-2-[5-amino-1-(5-phospho-beta-D-ribosyl)imidazole-4-carboxamido]succinate + ADP + phosphate + 2 H(+). It functions in the pathway purine metabolism; IMP biosynthesis via de novo pathway; 5-amino-1-(5-phospho-D-ribosyl)imidazole-4-carboxamide from 5-amino-1-(5-phospho-D-ribosyl)imidazole-4-carboxylate: step 1/2. This chain is Phosphoribosylaminoimidazole-succinocarboxamide synthase, found in Thermotoga petrophila (strain ATCC BAA-488 / DSM 13995 / JCM 10881 / RKU-1).